Here is a 413-residue protein sequence, read N- to C-terminus: Monacolin J acid methylbutanoyltransferase (413 aa).

Position 73 (arginine 73) interacts with monacolin J. Serine 76 acts as the Acyl-ester intermediate in catalysis. Monacolin J contacts are provided by arginine 173, tyrosine 188, and tyrosine 258. Glycine 366 lines the 2-methylbutanoate pocket. Monacolin J contacts are provided by glutamate 388 and tryptophan 390.

Belongs to the class-A beta-lactamase family. Interacts with LovF.

It carries out the reaction monacolin J carboxylate + (S)-2-methylbutanoyl-[2-methylbutanoate polyketide synthase] = lovastatin carboxylate + holo-[2-methylbutanoate polyketide synthase]. Its pathway is polyketide biosynthesis; lovastatin biosynthesis. Monacolin J acid methylbutanoyltransferase; part of the gene cluster that mediates the biosynthesis of lovastatin (also known as mevinolin, mevacor or monacolin K), a hypolipidemic inhibitor of (3S)-hydroxymethylglutaryl-coenzyme A (HMG-CoA) reductase (HMGR). The first step in the biosynthesis of lovastatin is the production of dihydromonacolin L acid by the lovastatin nonaketide synthase lovB and the trans-acting enoyl reductase lovC via condensation of one acetyl-CoA unit and 8 malonyl-CoA units. Dihydromonacolin L acid is released from lovB by the thioesterase lovG. Next, dihydromonacolin L acid is oxidized by the dihydromonacolin L monooxygenase lovA twice to form monacolin J acid. The 2-methylbutyrate moiety of lovastatin is synthesized by the lovastatin diketide synthase lovF via condensation of one acetyl-CoA unit and one malonyl-CoA unit. Finally, the covalent attachment of this moiety to monacolin J acid is catalyzed by the transesterase lovD to yield lovastatin. LovD has broad substrate specificity and can also convert monacolin J to simvastatin using alpha-dimethylbutanoyl-S-methyl-3-mercaptopropionate (DMB-S-MMP) as the thioester acyl donor, and can also catalyze the reverse reaction and function as hydrolase in vitro. LovD has much higher activity with LovF-bound 2-methylbutanoate than with free diketide substrates. This Aspergillus terreus (strain NIH 2624 / FGSC A1156) protein is Monacolin J acid methylbutanoyltransferase.